Reading from the N-terminus, the 130-residue chain is Glycine cleavage system H protein (130 aa).

The Lipoyl-binding domain maps to 24 to 106 (IYSVGITEHA…YADGWLFRIR (83 aa)). An N6-lipoyllysine modification is found at lysine 65.

It belongs to the GcvH family. In terms of assembly, the glycine cleavage system is composed of four proteins: P, T, L and H. (R)-lipoate is required as a cofactor.

The glycine cleavage system catalyzes the degradation of glycine. The H protein shuttles the methylamine group of glycine from the P protein to the T protein. This chain is Glycine cleavage system H protein, found in Pectobacterium carotovorum subsp. carotovorum (strain PC1).